A 618-amino-acid polypeptide reads, in one-letter code: Membrane protein insertase YidC (618 aa).

Helical transmembrane passes span 3-23, 363-383, 439-459, 478-498, 520-540, and 545-565; these read KNTITGLVLIGILLVGFSFLS, WGLSMGIVLLLLTIMVKIVVF, LPMLLQFPILMALFMFVPSAI, FITFPFHIPFLGNHLSLFCLL, PQMAAMKWMMYLMPIMFLFVL, and SGLNYYYFISTLISVVTMIIL.

The protein belongs to the OXA1/ALB3/YidC family. Type 1 subfamily. Interacts with the Sec translocase complex via SecD. Specifically interacts with transmembrane segments of nascent integral membrane proteins during membrane integration.

It localises to the cell membrane. Its function is as follows. Required for the insertion and/or proper folding and/or complex formation of integral membrane proteins into the membrane. Involved in integration of membrane proteins that insert both dependently and independently of the Sec translocase complex, as well as at least some lipoproteins. Aids folding of multispanning membrane proteins. The sequence is that of Membrane protein insertase YidC from Bacteroides fragilis (strain YCH46).